We begin with the raw amino-acid sequence, 121 residues long: Small ribosomal subunit protein uS13 (121 aa).

Residues 97-121 (VRGQRTRTNARTRRGARKTVAGKKK) form a disordered region. Positions 100–121 (QRTRTNARTRRGARKTVAGKKK) are enriched in basic residues.

It belongs to the universal ribosomal protein uS13 family. As to quaternary structure, part of the 30S ribosomal subunit. Forms a loose heterodimer with protein S19. Forms two bridges to the 50S subunit in the 70S ribosome.

Its function is as follows. Located at the top of the head of the 30S subunit, it contacts several helices of the 16S rRNA. In the 70S ribosome it contacts the 23S rRNA (bridge B1a) and protein L5 of the 50S subunit (bridge B1b), connecting the 2 subunits; these bridges are implicated in subunit movement. Contacts the tRNAs in the A and P-sites. The sequence is that of Small ribosomal subunit protein uS13 from Synechococcus sp. (strain CC9902).